Reading from the N-terminus, the 449-residue chain is Phosphoglucosamine mutase (449 aa).

The active-site Phosphoserine intermediate is Ser-100. 4 residues coordinate Mg(2+): Ser-100, Asp-241, Asp-243, and Asp-245. Position 100 is a phosphoserine (Ser-100).

It belongs to the phosphohexose mutase family. Requires Mg(2+) as cofactor. In terms of processing, activated by phosphorylation.

It catalyses the reaction alpha-D-glucosamine 1-phosphate = D-glucosamine 6-phosphate. Catalyzes the conversion of glucosamine-6-phosphate to glucosamine-1-phosphate. This is Phosphoglucosamine mutase from Clostridium botulinum (strain 657 / Type Ba4).